The sequence spans 242 residues: UPF0246 protein SPCG_1533 (242 aa).

Belongs to the UPF0246 family.

This Streptococcus pneumoniae (strain CGSP14) protein is UPF0246 protein SPCG_1533.